The sequence spans 145 residues: 3-hydroxyacyl-[acyl-carrier-protein] dehydratase FabZ (145 aa).

Residue His-47 is part of the active site.

This sequence belongs to the thioester dehydratase family. FabZ subfamily.

The protein localises to the cytoplasm. It catalyses the reaction a (3R)-hydroxyacyl-[ACP] = a (2E)-enoyl-[ACP] + H2O. Its function is as follows. Involved in unsaturated fatty acids biosynthesis. Catalyzes the dehydration of short chain beta-hydroxyacyl-ACPs and long chain saturated and unsaturated beta-hydroxyacyl-ACPs. The protein is 3-hydroxyacyl-[acyl-carrier-protein] dehydratase FabZ of Ruthia magnifica subsp. Calyptogena magnifica.